The chain runs to 39 residues: SPbeta prophage-derived uncharacterized protein YorT (39 aa).

This Bacillus subtilis (strain 168) protein is SPbeta prophage-derived uncharacterized protein YorT (yorT).